A 361-amino-acid chain; its full sequence is Chorismate synthase (361 aa).

Residues Arg48 and Arg54 each contribute to the NADP(+) site. FMN contacts are provided by residues Arg125–Ser127, Asn238–Ala239, Gly278, Lys293–Ser297, and Arg319.

The protein belongs to the chorismate synthase family. In terms of assembly, homotetramer. The cofactor is FMNH2.

The enzyme catalyses 5-O-(1-carboxyvinyl)-3-phosphoshikimate = chorismate + phosphate. The protein operates within metabolic intermediate biosynthesis; chorismate biosynthesis; chorismate from D-erythrose 4-phosphate and phosphoenolpyruvate: step 7/7. Functionally, catalyzes the anti-1,4-elimination of the C-3 phosphate and the C-6 proR hydrogen from 5-enolpyruvylshikimate-3-phosphate (EPSP) to yield chorismate, which is the branch point compound that serves as the starting substrate for the three terminal pathways of aromatic amino acid biosynthesis. This reaction introduces a second double bond into the aromatic ring system. The protein is Chorismate synthase of Methylobacillus flagellatus (strain ATCC 51484 / DSM 6875 / VKM B-1610 / KT).